The primary structure comprises 80 residues: MKLLGLSLLAVTILLCCNMARPEIKKKNVFSKPGYCPEYRVPCPFVLIPKCRRDKGCKDALKCCFFYCQMRCVDPWESPE.

An N-terminal signal peptide occupies residues 1–20 (MKLLGLSLLAVTILLCCNMA). Residues 29 to 76 (VFSKPGYCPEYRVPCPFVLIPKCRRDKGCKDALKCCFFYCQMRCVDPW) form the WAP domain. 4 cysteine pairs are disulfide-bonded: Cys36–Cys64, Cys43–Cys68, Cys51–Cys63, and Cys57–Cys72.

As to expression, constitutively expressed in kidney and epididymis.

The protein localises to the secreted. Functionally, antibacterial protein which inhibits the growth of E.coli and S.aureus. The protein is WAP four-disulfide core domain protein 15B (Wfdc15b) of Mus musculus (Mouse).